The following is a 40-amino-acid chain: Photosystem II reaction center protein X (40 aa).

The chain crosses the membrane as a helical span at residues Trp10–Ile30.

This sequence belongs to the PsbX family. Type 1 subfamily. In terms of assembly, PSII is composed of 1 copy each of membrane proteins PsbA, PsbB, PsbC, PsbD, PsbE, PsbF, PsbH, PsbI, PsbJ, PsbK, PsbL, PsbM, PsbT, PsbX, PsbY, PsbZ, Psb30/Ycf12, peripheral proteins PsbO, CyanoQ (PsbQ), PsbU, PsbV and a large number of cofactors. It forms dimeric complexes.

It is found in the cellular thylakoid membrane. Involved in the binding and/or turnover of quinones at the Q(B) site of photosystem II (PSII). PSII is a light-driven water plastoquinone oxidoreductase, using light energy to abstract electrons from H(2)O, generating a proton gradient subsequently used for ATP formation. The protein is Photosystem II reaction center protein X of Crocosphaera subtropica (strain ATCC 51142 / BH68) (Cyanothece sp. (strain ATCC 51142)).